Reading from the N-terminus, the 245-residue chain is Alanyl-tRNA editing protein AlaX-M (245 aa).

Zn(2+) is bound by residues H107, H111, C210, and H214.

It belongs to the class-II aminoacyl-tRNA synthetase family. Editing domain AlaX-M subfamily. The cofactor is Zn(2+).

The protein localises to the cytoplasm. Functionally, functions in trans to edit the amino acid moiety from mischarged charged tRNA(Ala). This Methanosarcina acetivorans (strain ATCC 35395 / DSM 2834 / JCM 12185 / C2A) protein is Alanyl-tRNA editing protein AlaX-M (alaXM).